We begin with the raw amino-acid sequence, 409 residues long: MATMISNLPRDLMEEILSRVPLKSMRAVRLTCKNWHTLSITISESLAKMYISKTTRESREGESTIITLMNYKLCLTSLVVDVDPYIEHKGKLTCFNLEHQVKISQVFYYEDDTITTRLVVWNPYWGQTRQIKTRYSHHAFSGRDSTYMFNYSLGYENKNSCRSHKLLRFIDYHWNYRGLHQFFWYEIYDFDSDLWTTLDVTPHWFIVISQSGVSLKGNTYWCARKRSGGYSDHIICFDFTRERFGPLLPLPFSFIDRHHSCVILSCVSEEKLAVLFQYKDHYYKNVVEIWITAKLEAEMVSWSKFLRINTGPIIHTSFFINEEKKVAIGFNDNRKTINIIGEAGYFRELDLGEHAEPYRRRHVFSYVPSSVQIKETAPGNIKKHQSSIETRLFDRNMLRLVAFEKKVSE.

In terms of domain architecture, F-box spans 2–49 (ATMISNLPRDLMEEILSRVPLKSMRAVRLTCKNWHTLSITISESLAKM). Kelch repeat units lie at residues 169–218 (FIDY…LKGN) and 221–266 (WCAR…ILSC).

This is F-box/kelch-repeat protein At1g48625 from Arabidopsis thaliana (Mouse-ear cress).